Reading from the N-terminus, the 513-residue chain is MQLNSTEISELIKQRIAQFNVVSEAHNEGTIVSVSDGVIRIHGLADCMQGEMISLPGNRYAIALNLERDSVGAVVMGPYADLAEGMKVKCTGRILEVPVGRGLLGRVVNTLGAPIDGKGPVEHDGFSPIEVIAPGVIDRQSVDQPVQTGYKSVDAMIPIGRGQRELIIGDRQTGKTAMAIDAIINQRDSGIKCVYVAIGQKASTIANVVRKLEEHGALSNTIVVVATASESAALQYLAPYAGCAMGEYFRDRGEDALIVYDDLSKQAVAYRQVSLLLRRPPGREAFPGDVFYLHSRLLERASRVNAEYVENFTKGAVKGKTGSLTALPIIETQAGDVSAFVPTNVISITDGQIFLETNLFNSGIRPAVNPGISVSRVGGAAQTKIIKKLSGGIRTALAQYRELAAFSQFASDLDEATRKQLSHGQKVTELLKQKQYAPMSVAQQGLVLFAAERGYLEDVELAKIGSFEAALLAYADRDHAPLMQEINQTGGYNDEIEGKLKSLLDSFKATQSW.

169 to 176 (GDRQTGKT) contacts ATP.

This sequence belongs to the ATPase alpha/beta chains family. In terms of assembly, F-type ATPases have 2 components, CF(1) - the catalytic core - and CF(0) - the membrane proton channel. CF(1) has five subunits: alpha(3), beta(3), gamma(1), delta(1), epsilon(1). CF(0) has three main subunits: a(1), b(2) and c(9-12). The alpha and beta chains form an alternating ring which encloses part of the gamma chain. CF(1) is attached to CF(0) by a central stalk formed by the gamma and epsilon chains, while a peripheral stalk is formed by the delta and b chains.

Its subcellular location is the cell inner membrane. It catalyses the reaction ATP + H2O + 4 H(+)(in) = ADP + phosphate + 5 H(+)(out). Its function is as follows. Produces ATP from ADP in the presence of a proton gradient across the membrane. The alpha chain is a regulatory subunit. The protein is ATP synthase subunit alpha of Cronobacter sakazakii (strain ATCC BAA-894) (Enterobacter sakazakii).